Here is a 406-residue protein sequence, read N- to C-terminus: D-alanyl-D-alanine carboxypeptidase (406 aa).

A signal peptide spans 1–31 (MVSGTVGRGTALGAVLLALLAVPAQAGTAAA). The active-site Acyl-ester intermediate is S93. Residues 151-154 (FAQT), 190-192 (YSN), R316, 330-332 (TGT), and 357-358 (SN) each bind substrate. A propeptide spanning residues 381-406 (AKLRSATSSATTVERHEDIAPGIARD) is cleaved from the precursor. The segment at 387-406 (TSSATTVERHEDIAPGIARD) is disordered. The span at 393–406 (VERHEDIAPGIARD) shows a compositional bias: basic and acidic residues.

This sequence belongs to the peptidase S12 family.

The protein resides in the secreted. The catalysed reaction is Preferential cleavage: (Ac)2-L-Lys-D-Ala-|-D-Ala. Also transpeptidation of peptidyl-alanyl moieties that are N-acyl substituents of D-alanine.. It functions in the pathway cell wall biogenesis; peptidoglycan biosynthesis. Catalyzes distinct carboxypeptidation and transpeptidation reactions during the last stages of wall peptidoglycan synthesis. Mistaking a beta-lactam antibiotic molecule for a normal substrate (i.e. a D-alanyl-D-alanine-terminated peptide), it becomes immobilized in the form of a long-lived, serine-ester-linked acyl enzyme and thus behave as penicillin-binding protein (PBP). In Streptomyces sp. (strain R61), this protein is D-alanyl-D-alanine carboxypeptidase.